A 287-amino-acid polypeptide reads, in one-letter code: U-megalopygitoxin(8)-Mc8 (287 aa).

A signal peptide spans 1 to 17 (MYLQYLVLSLFSTTVYG).

Belongs to the caterpillar 8 family. Contains 2 disulfide bonds. In terms of tissue distribution, expressed by the venom apparatus.

The protein localises to the secreted. Functionally, probable toxin. This chain is U-megalopygitoxin(8)-Mc8, found in Megalopyge crispata (Black-waved flannel moth).